We begin with the raw amino-acid sequence, 134 residues long: Small ribosomal subunit protein uS9c (134 aa).

It belongs to the universal ribosomal protein uS9 family.

It localises to the plastid. It is found in the chloroplast. In Thalassiosira pseudonana (Marine diatom), this protein is Small ribosomal subunit protein uS9c (rps9).